Consider the following 26-residue polypeptide: Dermaseptin-J1 (26 aa).

The residue at position 26 (Val26) is a Valine amide.

As to expression, expressed by the skin glands.

It localises to the secreted. Its function is as follows. Has antimicrobial activity. This Phasmahyla jandaia (Jandaia leaf frog) protein is Dermaseptin-J1.